The primary structure comprises 413 residues: Arginine biosynthesis bifunctional protein ArgJ (413 aa).

Threonine 163, lysine 189, threonine 200, glutamate 286, asparagine 408, and threonine 413 together coordinate substrate. The active-site Nucleophile is the threonine 200.

It belongs to the ArgJ family. Heterotetramer of two alpha and two beta chains.

The protein localises to the cytoplasm. The enzyme catalyses N(2)-acetyl-L-ornithine + L-glutamate = N-acetyl-L-glutamate + L-ornithine. It catalyses the reaction L-glutamate + acetyl-CoA = N-acetyl-L-glutamate + CoA + H(+). The protein operates within amino-acid biosynthesis; L-arginine biosynthesis; L-ornithine and N-acetyl-L-glutamate from L-glutamate and N(2)-acetyl-L-ornithine (cyclic): step 1/1. It functions in the pathway amino-acid biosynthesis; L-arginine biosynthesis; N(2)-acetyl-L-ornithine from L-glutamate: step 1/4. Catalyzes two activities which are involved in the cyclic version of arginine biosynthesis: the synthesis of N-acetylglutamate from glutamate and acetyl-CoA as the acetyl donor, and of ornithine by transacetylation between N(2)-acetylornithine and glutamate. In Staphylococcus aureus (strain Mu50 / ATCC 700699), this protein is Arginine biosynthesis bifunctional protein ArgJ.